A 352-amino-acid chain; its full sequence is Ion-translocating oxidoreductase complex subunit D (352 aa).

Helical transmembrane passes span 20-40 (IMLLVLIAALPGIAAQTWFFG), 42-62 (GTLFQIVLAAITALVAEAIVL), 69-91 (VASHLQDYSALLTGLLLAVSIPP), and 123-143 (PAMIGYVVLLISFPVQMTSWL). T187 is subject to FMN phosphoryl threonine. 5 helical membrane-spanning segments follow: residues 215-235 (LAGVGWQWVNLAWLVGGVFLL), 242-262 (WHIPVSFLLTLALCAALGWLF), 267-287 (LASPQLHLLSGATMLGAFFIL), 301-321 (LIFGALAGVLVWLIRSFGGYP), and 322-342 (DGVAFAVLLANITVPLIDYYT).

The protein belongs to the NqrB/RnfD family. In terms of assembly, the complex is composed of six subunits: RsxA, RsxB, RsxC, RsxD, RsxE and RsxG. FMN is required as a cofactor.

Its subcellular location is the cell inner membrane. Its function is as follows. Part of a membrane-bound complex that couples electron transfer with translocation of ions across the membrane. Required to maintain the reduced state of SoxR. This is Ion-translocating oxidoreductase complex subunit D from Salmonella paratyphi B (strain ATCC BAA-1250 / SPB7).